The following is a 619-amino-acid chain: Zinc finger protein 668 (619 aa).

M1 is modified (N-acetylmethionine). Position 10 is a phosphoserine (S10). A C2H2-type 1 zinc finger spans residues 22-44; sequence YKCLSCTKTFPNAPRAARHAATH. The interval 34 to 79 is disordered; the sequence is APRAARHAATHGPADCSEEVAEVKPKPETEAKAEEASGEKVSGSAA. Over residues 54–71 the composition is skewed to basic and acidic residues; that stretch reads AEVKPKPETEAKAEEASG. Residues K57, K59, K65, and K80 each participate in a glycyl lysine isopeptide (Lys-Gly) (interchain with G-Cter in SUMO2) cross-link. C2H2-type zinc fingers lie at residues 84–106, 112–134, 140–162, 168–190, 196–218, 224–246, 252–274, 280–302, 308–330, 336–358, and 364–386; these read YACP…GRSH, FPCP…LASH, FRCA…QRGH, YACA…RRTH, YSCE…ERSH, FLCS…QRIH, YRCP…ERTH, FLCP…QRAH, YHCE…RRVH, FKCL…ALVH, and FRCE…SRVH. K154 is covalently cross-linked (Glycyl lysine isopeptide (Lys-Gly) (interchain with G-Cter in SUMO2)). S387 carries the phosphoserine modification. The C2H2-type 13 zinc-finger motif lies at 392–414; that stretch reads FHCNACGKSFVVSSSLRKHERTH. The tract at residues 492-513 is disordered; sequence REAPGPLEGAGEAGGEEADEKP. Residue K512 forms a Glycyl lysine isopeptide (Lys-Gly) (interchain with G-Cter in SUMO2) linkage. 3 consecutive C2H2-type zinc fingers follow at residues 516-538, 544-566, and 572-594; these read FVCR…ERSH, FPCT…SRTH, and YTCP…ERTH.

This sequence belongs to the krueppel C2H2-type zinc-finger protein family.

Its subcellular location is the nucleus. Functionally, may be involved in transcriptional regulation. May play a role in DNA repair process. This Homo sapiens (Human) protein is Zinc finger protein 668 (ZNF668).